Here is an 811-residue protein sequence, read N- to C-terminus: Transmembrane protease serine 6 (811 aa).

Over 1–55 the chain is Cytoplasmic; the sequence is MLLLFHSKRMPVAEAPQVAGGQGDGGDGEEAEPEGMFKACEDSKRKARGYLRLVP. The helical; Signal-anchor for type II membrane protein transmembrane segment at 56–76 threads the bilayer; it reads LFVLLALLVLASAGVLLWYFL. At 77–811 the chain is on the extracellular side; it reads GYKAEVMVSQ…VISWIQQVVT (735 aa). The 126-residue stretch at 84–209 folds into the SEA domain; sequence VSQVYSGSLR…EGLVILEASV (126 aa). Asn136, Asn184, Asn216, Asn338, Asn433, and Asn453 each carry an N-linked (GlcNAc...) asparagine glycan. CUB domains follow at residues 213–336 and 335–452; these read AALN…QACE and CEVN…YGLY. Cysteines 335 and 366 form a disulfide. 3 consecutive LDL-receptor class A domains span residues 457–489, 490–526, and 530–567; these read PCPG…ERNC, VCRA…EQCQ, and PCGT…EHCD. Disulfide bonds link Cys458–Cys470, Cys464–Cys480, Cys474–Cys489, Cys491–Cys503, Cys497–Cys516, Cys510–Cys525, Cys531–Cys543, Cys538–Cys557, Cys551–Cys566, and Cys602–Cys618. The N-linked (GlcNAc...) asparagine glycan is linked to Asn518. The 235-residue stretch at 577–811 folds into the Peptidase S1 domain; the sequence is IVGGAVSSEG…VISWIQQVVT (235 aa). Residues His617 and Asp668 each act as charge relay system in the active site. 3 disulfides stabilise this stretch: Cys702-Cys768, Cys733-Cys747, and Cys758-Cys787. Ser762 serves as the catalytic Charge relay system.

It belongs to the peptidase S1 family. As to quaternary structure, interacts with HJV. In terms of processing, the single-chain zymogen undergoes autoproteolytic processing. This results in TMPRSS6 shedding from the cell surface and conversion into an activated two-chains form which is released extracellularly. The process involves a trans-activation mechanism that requires TMPRSS6 oligomerization.

The protein localises to the cell membrane. Membrane-bound serine protease. Through the cleavage of cell surface hemojuvelin (HJV), a regulator of the expression of the iron absorption-regulating hormone hepicidin/HAMP, plays a role in iron homeostasis. The polypeptide is Transmembrane protease serine 6 (TMPRSS6) (Homo sapiens (Human)).